The primary structure comprises 232 residues: Small ribosomal subunit protein uS3 (232 aa).

A KH type-2 domain is found at valine 39–arginine 107.

This sequence belongs to the universal ribosomal protein uS3 family. In terms of assembly, part of the 30S ribosomal subunit. Forms a tight complex with proteins S10 and S14.

Binds the lower part of the 30S subunit head. Binds mRNA in the 70S ribosome, positioning it for translation. This Aliivibrio fischeri (strain MJ11) (Vibrio fischeri) protein is Small ribosomal subunit protein uS3.